A 322-amino-acid polypeptide reads, in one-letter code: Ribokinase (322 aa).

Substrate is bound by residues 25 to 27 (MTD), 53 to 57 (GKGAN), and glutamate 154. Residues asparagine 199, 235-240 (TLGAEG), and threonine 256 contribute to the ATP site. 2 residues coordinate K(+): aspartate 263 and threonine 265. ATP contacts are provided by residues 268-269 (GD) and asparagine 295. Aspartate 269 serves as a coordination point for substrate. The active-site Proton acceptor is aspartate 269. Positions 301, 304, 306, and 310 each coordinate K(+).

Belongs to the carbohydrate kinase PfkB family. Ribokinase subfamily. In terms of assembly, homodimer. The cofactor is Mg(2+).

It is found in the cytoplasm. It localises to the nucleus. It catalyses the reaction D-ribose + ATP = D-ribose 5-phosphate + ADP + H(+). It participates in carbohydrate metabolism; D-ribose degradation; D-ribose 5-phosphate from beta-D-ribopyranose: step 2/2. With respect to regulation, activated by a monovalent cation that binds near, but not in, the active site. The most likely occupant of the site in vivo is potassium. Ion binding induces a conformational change that may alter substrate affinity. Competitively inhibited by phosphonoacetic acid, etidronate, 2-carboxethylphosphonic acid, N-(phosphonomethyl)glycine, N-(phosphonomethyl)iminodiacetic acid and clodronate. Its function is as follows. Catalyzes the phosphorylation of ribose at O-5 in a reaction requiring ATP and magnesium. The resulting D-ribose-5-phosphate can then be used either for sythesis of nucleotides, histidine, and tryptophan, or as a component of the pentose phosphate pathway. This Homo sapiens (Human) protein is Ribokinase.